The following is a 113-amino-acid chain: Nucleoid-associated protein SAV_4556 (113 aa).

The protein belongs to the YbaB/EbfC family. In terms of assembly, homodimer.

The protein resides in the cytoplasm. It is found in the nucleoid. In terms of biological role, binds to DNA and alters its conformation. May be involved in regulation of gene expression, nucleoid organization and DNA protection. This chain is Nucleoid-associated protein SAV_4556, found in Streptomyces avermitilis (strain ATCC 31267 / DSM 46492 / JCM 5070 / NBRC 14893 / NCIMB 12804 / NRRL 8165 / MA-4680).